The following is a 279-amino-acid chain: Pleckstrin homology domain-containing family F member 1 (279 aa).

In terms of domain architecture, PH spans 35–131 (VLLGEGVLTK…WISHIEECVR (97 aa)). An FYVE-type zinc finger spans residues 152-212 (DKATDICMRC…VCSLCYRELA (61 aa)). Residues Cys-158, Cys-161, Cys-175, Cys-178, Cys-183, Cys-186, Cys-204, and Cys-207 each contribute to the Zn(2+) site. Residues 220 to 263 (AREGIGGSPPQLSHLGGTVCGASSGDDDDSDEDREGNGDGDWPT) form a disordered region. The span at 244–253 (GDDDDSDEDR) shows a compositional bias: acidic residues.

As to expression, widely expressed.

Its subcellular location is the nucleus. It localises to the cytoplasm. The protein resides in the perinuclear region. The protein localises to the lysosome. May induce apoptosis through the lysosomal-mitochondrial pathway. Translocates to the lysosome initiating the permeabilization of lysosomal membrane (LMP) and resulting in the release of CTSD and CTSL to the cytoplasm. Triggers the caspase-independent apoptosis by altering mitochondrial membrane permeabilization (MMP) resulting in the release of PDCD8. The chain is Pleckstrin homology domain-containing family F member 1 (Plekhf1) from Mus musculus (Mouse).